The chain runs to 297 residues: MATH domain and coiled-coil domain-containing protein At2g05420 (297 aa).

The region spanning 7–139 is the MATH domain; that stretch reads SKTITWVIEN…NGELTLVAKV (133 aa). Residues 239-281 adopt a coiled-coil conformation; that stretch reads KLDWLEKKHGEIKEKKKKEEASLKRLQEMEKQIFNEAQIYKEK.

The sequence is that of MATH domain and coiled-coil domain-containing protein At2g05420 from Arabidopsis thaliana (Mouse-ear cress).